Here is a 197-residue protein sequence, read N- to C-terminus: Nucleoside triphosphate pyrophosphatase (197 aa).

The Proton acceptor role is filled by Asp72.

This sequence belongs to the Maf family. A divalent metal cation is required as a cofactor.

It is found in the cytoplasm. The catalysed reaction is a ribonucleoside 5'-triphosphate + H2O = a ribonucleoside 5'-phosphate + diphosphate + H(+). It carries out the reaction a 2'-deoxyribonucleoside 5'-triphosphate + H2O = a 2'-deoxyribonucleoside 5'-phosphate + diphosphate + H(+). Its function is as follows. Nucleoside triphosphate pyrophosphatase. May have a dual role in cell division arrest and in preventing the incorporation of modified nucleotides into cellular nucleic acids. This chain is Nucleoside triphosphate pyrophosphatase, found in Corynebacterium glutamicum (strain R).